Reading from the N-terminus, the 126-residue chain is Protein K7 (126 aa).

A helical transmembrane segment spans residues 24 to 44 (LPLHLWILCSLLAFLPLLVFI).

Interacts with host CAMLG; this interaction allows efficient apoptosis inhibition. Additionally, interacts with vGPCR/ORF74 and induces its proteasomeal degradation.

Its subcellular location is the host membrane. The protein localises to the host mitochondrion. Plays a role in the inhibition of host apoptosis to allow completion of the viral lytic replication and may thus favor the maintenance of persistent infection in infected host. In Homo sapiens (Human), this protein is Protein K7 (K7).